A 1034-amino-acid chain; its full sequence is Presequence protease, mitochondrial (1034 aa).

A mitochondrion-targeting transit peptide spans 1-26 (MLKTRLKQSRAISRVVRRYACSHPIS). Histidine 97 serves as a coordination point for Zn(2+). Glutamate 100 functions as the Proton acceptor in the catalytic mechanism. Position 101 (histidine 101) interacts with Zn(2+). Residue glutamate 173 is part of the active site. Glutamate 198 provides a ligand contact to Zn(2+).

This sequence belongs to the peptidase M16 family. PreP subfamily. In terms of assembly, monomer and homodimer; homodimerization is induced by binding of the substrate. Zn(2+) is required as a cofactor.

It localises to the mitochondrion intermembrane space. The protein resides in the mitochondrion matrix. Functionally, degrades mitochondrial transit peptides after their cleavage in the intermembrane space or in the matrix, and presequence peptides; clearance of these peptides is required to keep the presequence processing machinery running. Preferentially cleaves the N-terminal side of paired basic amino acid residues. Also degrades other unstructured peptides. May function as an ATP-dependent peptidase as opposed to a metalloendopeptidase. This chain is Presequence protease, mitochondrial (CYM1), found in Candida albicans (strain SC5314 / ATCC MYA-2876) (Yeast).